A 337-amino-acid chain; its full sequence is MTESAVCTGAVSAVKEVWEERIKKHHEDVKREKEFQHKLVRIWEDRVSLTKLKEKVTREDGRVILRIEKEEWKTLPSSLLKLNQLQEWQLHRTGLLKIPEFIGRFQHLIVLDLSRNTISEIPRGIGLLTRLQELILSYNKIKTVPKELSNCTSLEKLELAVNRDISDLPPELSKLLKLTHLDLSMNQFTTIPHAVLDMPALEWLDMGSNSLQQLPDSLDRMRSLHTLWLQRNEITCLPETIKNMKNLGTLVLSNNKLQDIPGCMEEMTNLRFVNFRDNPLRLEVTLPPSDNTDGEEEQELFGLQFMHAYIQESRRTEDQVNCLTQMPSSIHSDGESN.

LRR repeat units lie at residues 84-105 (QLQE…IGRF), 107-128 (HLIV…IGLL), 130-152 (RLQE…SNCT), 153-176 (SLEK…SKLL), 177-198 (KLTH…VLDM), 200-221 (ALEW…LDRM), 223-244 (SLHT…IKNM), 246-267 (NLGT…MEEM), and 269-290 (NLRF…PPSD).

As to quaternary structure, interacts with MYH7 (via C-terminus). As to expression, expressed in heart and skeletal muscle.

It localises to the cytoplasm. The protein resides in the myofibril. Its subcellular location is the sarcomere. The protein localises to the m line. Functionally, component of the sarcomeric M-band which plays a role in myocyte response to biomechanical stress. May regulate expression of other M-band proteins via an SRF-dependent pathway. Important for normal contractile function in heart. The protein is Leucine-rich repeat-containing protein 39 of Mus musculus (Mouse).